Consider the following 394-residue polypeptide: MLLEAPVYKEIFGAVTIHEVQKVIKMDTETEEVPIYTISNIPREKIYDLLGKMAVIVPMKNEKLHLVDGVLKAIPHKCPIIIVSNSKREGPNRYKLEVDLIRHFYNLTHSKIIMIHQKDPGLAKAFKEVGYTDILDENGMIRSGKGEGMLVGLLLAKAIGAEYVGFVDADNYIPGAVNEYVKDYAAGFLMSESEYTMVRLHWRHKPKVTKGTLYFKKWGRVSEITNHYLNLLVSEHTAFETTIMVTGNAGEHAMTMKLAEILPFSTGYSIEPYEIVYILERFGKWENVEEFKDVFDQGIEIFQIETLNPHFHEDKGKEHVKEMLLLSLATIYHSKLATDNLRKRILKDLRDHGILGENEEPPKPLVMRPIKEIPIKEWMDIVEGNSETLLRFEL.

This sequence belongs to the glycosyltransferase 2 family. The cofactor is Mg(2+).

The protein resides in the cytoplasm. The enzyme catalyses (2R)-3-phosphoglycerate + GDP-alpha-D-mannose = 2-O-(alpha-D-mannosyl)-3-phosphoglycerate + GDP + H(+). It functions in the pathway carbohydrate biosynthesis; 2-(alpha-D-mannosyl)-D-glycerate biosynthesis; 2-(alpha-D-mannosyl)-D-glycerate from GDP-alpha-D-mannose (MPG route): step 1/2. Transfers a mannosyl group from GDP-mannose to phosphoglycerate to form mannosyl-3-phosphoglycerate (MPG). The enzyme is absolutely specific for GDP-mannose and 3-phosphoglycerate, and transfers the mannosyl group with retention of configuration. This is Mannosyl-3-phosphoglycerate synthase (mngA) from Pyrococcus horikoshii (strain ATCC 700860 / DSM 12428 / JCM 9974 / NBRC 100139 / OT-3).